The chain runs to 218 residues: CTD kinase subunit gamma (218 aa).

One can recognise a CID domain in the interval 2 to 138 (DPFEGRMTFL…DAMATVEAHE (137 aa)). The segment at 137–157 (HEQASKSGDTSTSGAISKNDI) is disordered. Polar residues predominate over residues 141–152 (SKSGDTSTSGAI).

This sequence belongs to the CTK3 family. As to quaternary structure, CTDK-I consists of three subunits, ctk1/lsk1, ctk2/lsc1 and ctk3 (also called alpha, beta and gamma).

Its subcellular location is the cytoplasm. The protein resides in the nucleus. Subunit of the CTDK-I complex, which hyperphosphorylates the C-terminal heptapeptide repeat domain (CTD) of the largest RNA polymerase II subunit. As part of the CTDK-I complex, involved in RNA polymerase II transcriptional elongation and pre-mRNA 3'-end processing. Together with ctk2, required for ctk1/lsk1 CTD kinase activation. The polypeptide is CTD kinase subunit gamma (Schizosaccharomyces pombe (strain 972 / ATCC 24843) (Fission yeast)).